The sequence spans 302 residues: HTH-type transcriptional regulator ArgP (302 aa).

The region spanning 4-60 (PDYRTLQALDAVIRERGFERAAQKLCITQSAVSQRIKQLENLFGQPLLVRTVPPRPT) is the HTH lysR-type domain. Residues 21 to 40 (FERAAQKLCITQSAVSQRIK) constitute a DNA-binding region (H-T-H motif).

Belongs to the LysR transcriptional regulatory family. Homodimer.

In terms of biological role, controls the transcription of genes involved in arginine and lysine metabolism. The polypeptide is HTH-type transcriptional regulator ArgP (Yersinia pseudotuberculosis serotype O:1b (strain IP 31758)).